We begin with the raw amino-acid sequence, 471 residues long: 5-hydroxytryptamine receptor 2A (471 aa).

Residues 1–80 (MDILCEENTS…LQEKNWSALL (80 aa)) are Extracellular-facing. N-linked (GlcNAc...) asparagine glycosylation is found at asparagine 8, asparagine 38, asparagine 44, asparagine 51, and asparagine 54. A helical transmembrane segment spans residues 81–97 (TAVVIILTIAGNILVIM). At 98–111 (AVSLEKKLQNATNY) the chain is on the cytoplasmic side. A helical transmembrane segment spans residues 112 to 137 (FLMSLAIADMLLGFLVMPVSMLTILY). Topologically, residues 138–146 (GYRWPLPSK) are extracellular. The chain crosses the membrane as a helical span at residues 147 to 171 (LCAVWIYLDVLFSTASIMHLCAISL). An intrachain disulfide couples cysteine 148 to cysteine 227. Aspartate 155 lines the serotonin pocket. Residues 172-174 (DRY) carry the DRY motif; important for ligand-induced conformation changes motif. Residues 172–191 (DRYVAIQNPIHHSRFNSRTK) are Cytoplasmic-facing. The chain crosses the membrane as a helical span at residues 192-215 (AFLKIIAVWTISVGISMPIPVFGL). At 216–232 (QDDSKVFKEGSCLLADD) the chain is on the extracellular side. Residues 233-258 (NFVLIGSFVSFFIPLTIMVITYFLTI) form a helical membrane-spanning segment. Over 259–322 (KSLQKEATLC…QSISNEQKAC (64 aa)) the chain is Cytoplasmic. Serine 280 carries the post-translational modification Phosphoserine. The chain crosses the membrane as a helical span at residues 323-348 (KVLGIVFFLFVVMWCPFFITNIMAVI). Asparagine 343 contributes to the serotonin binding site. A disulfide bridge links cysteine 349 with cysteine 353. Residues 349–356 (CKESCNED) are Extracellular-facing. A helical membrane pass occupies residues 357 to 382 (VIGALLNVFVWIGYLSSAVNPLVYTL). Positions 376 to 380 (NPLVY) match the NPxxY motif; important for ligand-induced conformation changes and signaling motif. Over 383-471 (FNKTYRSAFS…DGVNEKVSCV (89 aa)) the chain is Cytoplasmic. The tract at residues 450–471 (KQHSEDASKDNSDGVNEKVSCV) is disordered. The span at 451 to 465 (QHSEDASKDNSDGVN) shows a compositional bias: basic and acidic residues. The PDZ-binding motif lies at 469–471 (SCV).

Belongs to the G-protein coupled receptor 1 family. In terms of assembly, interacts (via C-terminus) with MPDZ and PATJ. May interact (via C-terminus) with MPP3, PRDX6, DLG4, DLG1, CASK, APBA1 and MAGI2. Interacts with GRM2 and DRD2; this may affect signaling.

The protein localises to the cell membrane. It is found in the cell projection. The protein resides in the dendrite. It localises to the axon. Its subcellular location is the cytoplasmic vesicle. The protein localises to the membrane. It is found in the caveola. The protein resides in the presynapse. G-protein coupled receptor activity is regulated by lipids: oleamide increases HTR2A-mediated activity. Its function is as follows. G-protein coupled receptor for 5-hydroxytryptamine (serotonin). Also functions as a receptor for various drugs and psychoactive substances, including mescaline, psilocybin, 1-(2,5-dimethoxy-4-iodophenyl)-2-aminopropane (DOI) and lysergic acid diethylamide (LSD). Ligand binding causes a conformation change that triggers signaling via guanine nucleotide-binding proteins (G proteins) and modulates the activity of downstream effectors. HTR2A is coupled to G(q)/G(11) G alpha proteins and activates phospholipase C-beta, releasing diacylglycerol (DAG) and inositol 1,4,5-trisphosphate (IP3) second messengers that modulate the activity of phosphatidylinositol 3-kinase and promote the release of Ca(2+) ions from intracellular stores, respectively. Beta-arrestin family members inhibit signaling via G proteins and mediate activation of alternative signaling pathways. Affects neural activity, perception, cognition and mood. Plays a role in the regulation of behavior, including responses to anxiogenic situations and psychoactive substances. Plays a role in intestinal smooth muscle contraction, and may play a role in arterial vasoconstriction. This chain is 5-hydroxytryptamine receptor 2A (HTR2A), found in Macaca mulatta (Rhesus macaque).